The primary structure comprises 201 residues: Large ribosomal subunit protein uL4 (201 aa).

Residues 44–68 (RAQKSRAEVSGSGRKPWRQKGTGRA) form a disordered region.

The protein belongs to the universal ribosomal protein uL4 family. Part of the 50S ribosomal subunit.

In terms of biological role, one of the primary rRNA binding proteins, this protein initially binds near the 5'-end of the 23S rRNA. It is important during the early stages of 50S assembly. It makes multiple contacts with different domains of the 23S rRNA in the assembled 50S subunit and ribosome. Its function is as follows. Forms part of the polypeptide exit tunnel. This Buchnera aphidicola subsp. Acyrthosiphon pisum (strain 5A) protein is Large ribosomal subunit protein uL4.